The following is a 594-amino-acid chain: MASSTPSSSATSSNAGADPNTTNLRPTTYDTWCGVAHGCTRKLGLKICGFLQRTNSLEEKSRLVSAFKERQSSKNLLSCENSDRDARFRRTETDFSNLFARDLLPAKNGEEQTVQFLLEVVDILLNYVRKTFDRSTKVLDFHHPHQLLEGMEGFNLELSDHPESLEQILVDCRDTLKYGVRTGHPRFFNQLSTGLDIIGLAGEWLTSTANTNMFTYEIAPVFVLMEQITLKKMREIIGWSSKDGDGIFSPGGAISNMYSIMAARYKYFPEVKTKGMAAVPKLVLFTSEQSHYSIKKAGAALGFGTDNVILIKCNERGKIIPADFEAKILEAKQKGYVPFYVNATAGTTVYGAFDPIQEIADICEKYNLWLHVDAAWGGGLLMSRKHRHKLNGIERANSVTWNPHKMMGVLLQCSAILIKEKGILQGCNQMCAGYLFQPDKQYDVSYDTGDKAIQCGRHVDIFKFWLMWKAKGTVGFESQINKCLELAEYLYAKIKNREEFEMVFNGEPEHTNVCFWYIPQSLRGVPDSPQRREKLHKVAPKIKALMMESGTTMVGYQPQGDKANFFRMVISNPAATQSDIDFLIEEIERLGQDL.

The span at 1-13 shows a compositional bias: low complexity; the sequence is MASSTPSSSATSS. The interval 1-23 is disordered; sequence MASSTPSSSATSSNAGADPNTTN. The residue at position 78 (Ser78) is a Phosphoserine. 190-192 contributes to the 4-aminobutanoate binding site; that stretch reads QLS. Residue Lys405 is modified to N6-(pyridoxal phosphate)lysine. A 4-aminobutanoate-binding site is contributed by Arg567.

This sequence belongs to the group II decarboxylase family. As to quaternary structure, homodimer. Requires pyridoxal 5'-phosphate as cofactor.

It catalyses the reaction L-glutamate + H(+) = 4-aminobutanoate + CO2. In terms of biological role, catalyzes the synthesis of the inhibitory neurotransmitter gamma-aminobutyric acid (GABA) with pyridoxal 5'-phosphate as cofactor. This is Glutamate decarboxylase 1 (GAD1) from Pan troglodytes (Chimpanzee).